A 411-amino-acid chain; its full sequence is cAMP-dependent protein kinase regulatory subunit (411 aa).

Positions 1–144 (MAESAFPSAQ…SWTPPYHEKT (144 aa)) are disordered. The interval 23-159 (AAFQKISEED…RLKTAVSSNF (137 aa)) is dimerization and phosphorylation. Positions 46–58 (SANAAAASSSTGS) are enriched in low complexity. The span at 85–96 (EEDEEGADEFPP) shows a compositional bias: acidic residues. The segment covering 119-136 (TSVSAESLNPTSAGSDSW) has biased composition (polar residues). The residue at position 120 (S120) is a Phosphoserine. 3',5'-cyclic AMP-binding positions include 160 to 289 (LFSH…FLEE), E238, R247, 292 to 411 (LLSS…PVPA), E359, and R368.

Belongs to the cAMP-dependent kinase regulatory chain family. In terms of assembly, tetramer, composed of 2 regulatory (R) and 2 catalytic (C) subunits. In the presence of cAMP it dissociates into 2 active monomeric C subunits and an R dimer.

The protein is cAMP-dependent protein kinase regulatory subunit (pkaR) of Aspergillus niger.